A 504-amino-acid chain; its full sequence is Histidine--tRNA ligase (504 aa).

The protein belongs to the class-II aminoacyl-tRNA synthetase family. In terms of assembly, homodimer.

The protein resides in the cytoplasm. The catalysed reaction is tRNA(His) + L-histidine + ATP = L-histidyl-tRNA(His) + AMP + diphosphate + H(+). In Rhizobium rhizogenes (strain K84 / ATCC BAA-868) (Agrobacterium radiobacter), this protein is Histidine--tRNA ligase.